The primary structure comprises 127 residues: uncharacterized protein (127 aa).

A helical transmembrane segment spans residues 12–32 (FFFLILFYFCIISSFLFLFIF).

It localises to the membrane. This is an uncharacterized protein from Saccharomyces cerevisiae (strain ATCC 204508 / S288c) (Baker's yeast).